Reading from the N-terminus, the 787-residue chain is Phenylalanine--tRNA ligase beta subunit (787 aa).

The tRNA-binding domain maps to 39-149 (APAFAGVVIA…EDAPVGTNIR (111 aa)). Residues 400–475 (PEAKQVGLRL…RVYGYENIPD (76 aa)) form the B5 domain. The Mg(2+) site is built by D453, D459, E462, and E463. The region spanning 694-786 (SKFQPVRRDL…AATAAGARLR (93 aa)) is the FDX-ACB domain.

This sequence belongs to the phenylalanyl-tRNA synthetase beta subunit family. Type 1 subfamily. As to quaternary structure, tetramer of two alpha and two beta subunits. Requires Mg(2+) as cofactor.

The protein localises to the cytoplasm. It catalyses the reaction tRNA(Phe) + L-phenylalanine + ATP = L-phenylalanyl-tRNA(Phe) + AMP + diphosphate + H(+). In Neisseria meningitidis serogroup B (strain ATCC BAA-335 / MC58), this protein is Phenylalanine--tRNA ligase beta subunit (pheT).